The primary structure comprises 277 residues: Phosphoribosylaminoimidazole-succinocarboxamide synthase (277 aa).

It belongs to the SAICAR synthetase family.

The catalysed reaction is 5-amino-1-(5-phospho-D-ribosyl)imidazole-4-carboxylate + L-aspartate + ATP = (2S)-2-[5-amino-1-(5-phospho-beta-D-ribosyl)imidazole-4-carboxamido]succinate + ADP + phosphate + 2 H(+). The protein operates within purine metabolism; IMP biosynthesis via de novo pathway; 5-amino-1-(5-phospho-D-ribosyl)imidazole-4-carboxamide from 5-amino-1-(5-phospho-D-ribosyl)imidazole-4-carboxylate: step 1/2. The protein is Phosphoribosylaminoimidazole-succinocarboxamide synthase of Salinispora tropica (strain ATCC BAA-916 / DSM 44818 / JCM 13857 / NBRC 105044 / CNB-440).